The primary structure comprises 59 residues: Conotoxin Cl14.4 (59 aa).

The signal sequence occupies residues 1 to 19 (MKFLLFLSVALLLTSFIET). The propeptide occupies 20-36 (VTVNKAGMERPSRALVG). Isoleucine 58 carries the isoleucine amide modification.

In terms of processing, contains 2 disulfide bonds. As to expression, expressed by the venom duct.

Its subcellular location is the secreted. The sequence is that of Conotoxin Cl14.4 from Californiconus californicus (California cone).